A 160-amino-acid polypeptide reads, in one-letter code: Cathelin-related peptide SC5 (160 aa).

Positions 1-29 are cleaved as a signal peptide; it reads METQRASLSLGRRSLWLLLLGLVLASASA. A propeptide spanning residues 30–131 is cleaved from the precursor; sequence QALSYREAVL…DITCAEPQSV (102 aa). 2 disulfide bridges follow: C86-C97 and C108-C125.

Belongs to the cathelicidin family.

It is found in the secreted. Broad spectrum bactericidal agent. The chain is Cathelin-related peptide SC5 from Ovis aries (Sheep).